We begin with the raw amino-acid sequence, 79 residues long: Exodeoxyribonuclease 7 small subunit (79 aa).

This sequence belongs to the XseB family. Heterooligomer composed of large and small subunits.

It localises to the cytoplasm. It catalyses the reaction Exonucleolytic cleavage in either 5'- to 3'- or 3'- to 5'-direction to yield nucleoside 5'-phosphates.. In terms of biological role, bidirectionally degrades single-stranded DNA into large acid-insoluble oligonucleotides, which are then degraded further into small acid-soluble oligonucleotides. The chain is Exodeoxyribonuclease 7 small subunit from Geobacillus kaustophilus (strain HTA426).